Reading from the N-terminus, the 335-residue chain is Glyceraldehyde-3-phosphate dehydrogenase (335 aa).

Residues 12 to 13, Asp36, Arg80, and Ser122 contribute to the NAD(+) site; that span reads RI. D-glyceraldehyde 3-phosphate is bound by residues 152 to 154, Thr183, Arg198, 211 to 212, and Arg234; these read SCT and TG. Cys153 (nucleophile) is an active-site residue. Asn316 is a binding site for NAD(+).

It belongs to the glyceraldehyde-3-phosphate dehydrogenase family. In terms of assembly, homotetramer.

It localises to the cytoplasm. The enzyme catalyses D-glyceraldehyde 3-phosphate + phosphate + NAD(+) = (2R)-3-phospho-glyceroyl phosphate + NADH + H(+). The protein operates within carbohydrate degradation; glycolysis; pyruvate from D-glyceraldehyde 3-phosphate: step 1/5. Its function is as follows. Catalyzes the oxidative phosphorylation of glyceraldehyde 3-phosphate (G3P) to 1,3-bisphosphoglycerate (BPG) using the cofactor NAD. The first reaction step involves the formation of a hemiacetal intermediate between G3P and a cysteine residue, and this hemiacetal intermediate is then oxidized to a thioester, with concomitant reduction of NAD to NADH. The reduced NADH is then exchanged with the second NAD, and the thioester is attacked by a nucleophilic inorganic phosphate to produce BPG. The sequence is that of Glyceraldehyde-3-phosphate dehydrogenase (gap) from Xanthobacter flavus.